Reading from the N-terminus, the 216-residue chain is uncharacterized protein (216 aa).

This is an uncharacterized protein from Acanthamoeba polyphaga mimivirus (APMV).